We begin with the raw amino-acid sequence, 422 residues long: Gamma-glutamyl phosphate reductase (422 aa).

This sequence belongs to the gamma-glutamyl phosphate reductase family.

The protein resides in the cytoplasm. The catalysed reaction is L-glutamate 5-semialdehyde + phosphate + NADP(+) = L-glutamyl 5-phosphate + NADPH + H(+). Its pathway is amino-acid biosynthesis; L-proline biosynthesis; L-glutamate 5-semialdehyde from L-glutamate: step 2/2. Catalyzes the NADPH-dependent reduction of L-glutamate 5-phosphate into L-glutamate 5-semialdehyde and phosphate. The product spontaneously undergoes cyclization to form 1-pyrroline-5-carboxylate. The sequence is that of Gamma-glutamyl phosphate reductase from Nitrosomonas europaea (strain ATCC 19718 / CIP 103999 / KCTC 2705 / NBRC 14298).